The following is a 273-amino-acid chain: Proteasome subunit beta type-5-B (273 aa).

The propeptide at 1–57 (MKLDTSGLETTMPVIGFGSNSEMLDGFSSAPSFDLPRTTDFDGFQKKAVEMVKPAKG) is removed in mature form. T58 serves as the catalytic Nucleophile.

Belongs to the peptidase T1B family. As to quaternary structure, component of the 20S core complex of the 26S proteasome. The 26S proteasome is composed of a core protease (CP), known as the 20S proteasome, capped at one or both ends by the 19S regulatory particle (RP/PA700). The 20S proteasome core is composed of 28 subunits that are arranged in four stacked rings, resulting in a barrel-shaped structure. The two end rings are each formed by seven alpha subunits, and the two central rings are each formed by seven beta subunits. The catalytic chamber with the active sites is on the inside of the barrel.

It is found in the cytoplasm. The protein resides in the nucleus. It carries out the reaction Cleavage of peptide bonds with very broad specificity.. In terms of biological role, the proteasome is a multicatalytic proteinase complex which is characterized by its ability to cleave peptides with Arg, Phe, Tyr, Leu, and Glu adjacent to the leaving group at neutral or slightly basic pH. The proteasome has an ATP-dependent proteolytic activity. The sequence is that of Proteasome subunit beta type-5-B (PBE2) from Arabidopsis thaliana (Mouse-ear cress).